Consider the following 208-residue polypeptide: ATP-dependent Clp protease proteolytic subunit (208 aa).

Catalysis depends on S106, which acts as the Nucleophile. The active site involves H131.

This sequence belongs to the peptidase S14 family. Fourteen ClpP subunits assemble into 2 heptameric rings which stack back to back to give a disk-like structure with a central cavity, resembling the structure of eukaryotic proteasomes.

It localises to the cytoplasm. It catalyses the reaction Hydrolysis of proteins to small peptides in the presence of ATP and magnesium. alpha-casein is the usual test substrate. In the absence of ATP, only oligopeptides shorter than five residues are hydrolyzed (such as succinyl-Leu-Tyr-|-NHMec, and Leu-Tyr-Leu-|-Tyr-Trp, in which cleavage of the -Tyr-|-Leu- and -Tyr-|-Trp bonds also occurs).. Cleaves peptides in various proteins in a process that requires ATP hydrolysis. Has a chymotrypsin-like activity. Plays a major role in the degradation of misfolded proteins. The sequence is that of ATP-dependent Clp protease proteolytic subunit from Caulobacter sp. (strain K31).